The following is an 875-amino-acid chain: Metal transporter CNNM2 (875 aa).

The Extracellular portion of the chain corresponds to 1–250 (MIGCGACEPE…TKMIVGEEKK (250 aa)). N112 is a glycosylation site (N-linked (GlcNAc...) asparagine). The segment at 122-148 (EHERRRHTPGERGLGGPAPPEPDSGPQ) is disordered. A helical membrane pass occupies residues 251 to 271 (FLLPFWLQVIFISLLLCLSGM). Residues 251 to 431 (FLLPFWLQVI…DPYNDLVKEE (181 aa)) enclose the CNNM transmembrane domain. The Cytoplasmic segment spans residues 272–313 (FSGLNLGLMALDPMELRIVQNCGTEKEKNYAKRIEPVRRQGN). Residues 314–334 (YLLCSLLLGNVLVNTTLTILL) constitute an intramembrane region (helical). At 335-338 (DDIA) the chain is on the cytoplasmic side. Residues 339-359 (GSGLVAVVVSTIGIVIFGEIV) form a helical membrane-spanning segment. The Extracellular segment spans residues 360–368 (PQAICSRHG). The chain crosses the membrane as a helical span at residues 369–389 (LAVGANTIFLTKFFMMMTFPA). Over 390–875 (SYPVSKLLDC…NHSLHSEGAI (486 aa)) the chain is Cytoplasmic. 2 consecutive CBS domains span residues 450–511 (MTPL…CTPL) and 518–584 (YNHP…ILDE). Residues 741–763 (AGSPGENKSPPRPCGLNHSDSLS) form a disordered region. The residue at position 761 (S761) is a Phosphoserine.

It belongs to the ACDP family.

The protein localises to the cell membrane. Divalent metal cation transporter. Mediates transport of divalent metal cations in an order of Mg(2+) &gt; Co(2+) &gt; Mn(2+) &gt; Sr(2+) &gt; Ba(2+) &gt; Cu(2+) &gt; Fe(2+). In Rattus norvegicus (Rat), this protein is Metal transporter CNNM2 (Cnnm2).